A 130-amino-acid polypeptide reads, in one-letter code: Small ribosomal subunit protein uS9 (130 aa).

Residues 108–130 (SREKERKKYGQRGARARFQYSKR) form a disordered region.

The protein belongs to the universal ribosomal protein uS9 family.

The polypeptide is Small ribosomal subunit protein uS9 (Solidesulfovibrio magneticus (strain ATCC 700980 / DSM 13731 / RS-1) (Desulfovibrio magneticus)).